Here is a 456-residue protein sequence, read N- to C-terminus: 26S proteasome non-ATPase regulatory subunit 12 (456 aa).

Ala2 carries the post-translational modification N-acetylalanine. Lys92 is covalently cross-linked (Glycyl lysine isopeptide (Lys-Gly) (interchain with G-Cter in SUMO1); alternate). Lys92 participates in a covalent cross-link: Glycyl lysine isopeptide (Lys-Gly) (interchain with G-Cter in SUMO2); alternate. Residues Lys221 and Lys368 each carry the N6-acetyllysine modification. Positions 242 to 420 (SICKHYRAIY…GIINFQRPKD (179 aa)) constitute a PCI domain.

Belongs to the proteasome subunit p55 family. In terms of assembly, component of the 19S proteasome regulatory particle complex. The 26S proteasome consists of a 20S core particle (CP) and two 19S regulatory subunits (RP). The regulatory particle is made of a lid composed of 9 subunits including PSMD12, a base containing 6 ATPases and few additional components. Interacts with ERCC6.

Component of the 26S proteasome, a multiprotein complex involved in the ATP-dependent degradation of ubiquitinated proteins. This complex plays a key role in the maintenance of protein homeostasis by removing misfolded or damaged proteins, which could impair cellular functions, and by removing proteins whose functions are no longer required. Therefore, the proteasome participates in numerous cellular processes, including cell cycle progression, apoptosis, or DNA damage repair. This chain is 26S proteasome non-ATPase regulatory subunit 12 (PSMD12), found in Pongo abelii (Sumatran orangutan).